We begin with the raw amino-acid sequence, 255 residues long: Menaquinone reductase, iron-sulfur cluster-binding subunit (255 aa).

4Fe-4S ferredoxin-type domains follow at residues 11–41, 66–97, and 99–128; these read WGMV…PQPD, HDVA…KNEE, and GIVS…FNWF. Residues Cys20, Cys23, Cys26, Cys30, Cys75, Cys78, Cys83, Cys87, Cys108, Cys111, Cys114, and Cys118 each coordinate [4Fe-4S] cluster. Cys155, Cys158, Cys188, and Cys192 together coordinate [3Fe-4S] cluster.

As to quaternary structure, the Qrc complex is composed of four subunits: QrcA, QrcB, QrcC and QrcD. Can form a supercomplex with the [NiFe] hydrogenase HynA1 and the tetraheme Type I cytochrome c3 TpIc(3), its physiological electron donors. It depends on [4Fe-4S] cluster as a cofactor. The cofactor is [3Fe-4S] cluster.

The protein resides in the periplasm. Component of the respiratory Qrc complex, that catalyzes the reduction of the menaquinone pool using electrons transferred from the reduced periplasmic cytochrome c3, and which is probably involved in sulfate respiration. Is likely essential for growth on H(2) or formate since the periplasmic hydrogenases and/or formate dehydrogenases act as primary electron donors for the Qrc complex. QrcC is an electron-transferring subunit; its cubane iron sulfur clusters form a pathway for electron transfer between the hemes of QrcA and the membrane quinone pool. In Nitratidesulfovibrio vulgaris (strain ATCC 29579 / DSM 644 / CCUG 34227 / NCIMB 8303 / VKM B-1760 / Hildenborough) (Desulfovibrio vulgaris), this protein is Menaquinone reductase, iron-sulfur cluster-binding subunit.